A 515-amino-acid chain; its full sequence is Slowpoke-binding protein (515 aa).

Residues methionine 1–valine 31 form a disordered region. Residues alanine 7–valine 20 are compositionally biased toward polar residues. Phosphoserine is present on residues serine 54 and serine 79. A compositionally biased stretch (polar residues) spans serine 73–glutamine 82. The disordered stretch occupies residues serine 73 to serine 94. The segment at asparagine 191 to aspartate 203 is interaction with Slo. The segment at serine 483–glycine 503 is disordered.

Interacts specifically with Slo; which activates Slo activity. Interacts with 14-3-3-zeta when phosphorylated. Forms a heterotetrameric complex containing phosphorylated Slob, Slo and 14-3-3-zeta, which represses Slo activity due to the indirect interaction between Slo and 14-3-3-zeta. In terms of processing, phosphorylated. Phosphorylation of Ser-54 and Ser-79 is required for the interaction with 14-3-3-zeta but not with that of Slo. In terms of tissue distribution, expressed in head. In larval brain, it is expressed in the mushroom body. Also expressed in larval muscles.

The protein localises to the cytoplasm. Its function is as follows. Regulator of calcium-activated channel Slo. Increases or decreases the voltage sensitivity of Slo, depending on the absence or presence of 14-3-3-zeta in the complex, respectively. The polypeptide is Slowpoke-binding protein (Slob) (Drosophila melanogaster (Fruit fly)).